Here is a 286-residue protein sequence, read N- to C-terminus: NFU1 iron-sulfur cluster scaffold homolog, mitochondrial (286 aa).

A mitochondrion-targeting transit peptide spans 1–66 (MSKLLTNTAL…RQIQLSGARN (66 aa)). The nifU stretch occupies residues 182–250 (IKELLDTRIR…IPEVESVEQV (69 aa)). 2 residues coordinate [4Fe-4S] cluster: C219 and C222.

This sequence belongs to the NifU family.

Its subcellular location is the mitochondrion. Functionally, molecular scaffold for [Fe-S] cluster assembly of mitochondrial iron-sulfur proteins. In Drosophila ananassae (Fruit fly), this protein is NFU1 iron-sulfur cluster scaffold homolog, mitochondrial.